The following is a 282-amino-acid chain: Homeobox protein CDX-4 (282 aa).

Disordered regions lie at residues 13-36 (MYPG…GGSG) and 98-156 (MNDM…SPYA). Low complexity predominate over residues 20-29 (SPGGSSTAGV). Polar residues-rich tracts occupy residues 110–124 (DYST…SNGG) and 133–148 (SLVS…TSPS). Positions 171-230 (KEKYRVVYTDHQRLELEKEFHCNRYITIRRKSELAVNLGLSERQVKIWFQNRRAKERKMI) form a DNA-binding region, homeobox.

It belongs to the Caudal homeobox family.

It localises to the nucleus. This Mus musculus (Mouse) protein is Homeobox protein CDX-4 (Cdx4).